A 91-amino-acid chain; its full sequence is Small ribosomal subunit protein uS19 (91 aa).

It belongs to the universal ribosomal protein uS19 family.

Its function is as follows. Protein S19 forms a complex with S13 that binds strongly to the 16S ribosomal RNA. This is Small ribosomal subunit protein uS19 from Bordetella avium (strain 197N).